We begin with the raw amino-acid sequence, 300 residues long: Protein ARMCX6 (300 aa).

Topologically, residues 1–6 (MGRARE) are mitochondrial intermembrane. Mitochondrion outer membrane (MOM)-targeting sequence regions lie at residues 1–6 (MGRARE) and 26–36 (KLTIGRDDSEK). The chain crosses the membrane as a helical; Signal-anchor span at residues 7 to 27 (VGWMAAGLMIGAGACYCVYKL). Residues 28 to 300 (TIGRDDSEKL…REILLETPAP (273 aa)) lie on the Cytoplasmic side of the membrane. Disordered regions lie at residues 35–54 (EKLE…LDEE) and 69–99 (WTED…RAHP).

The protein belongs to the eutherian X-chromosome-specific Armcx family.

It localises to the mitochondrion. The protein resides in the mitochondrion outer membrane. Functionally, may regulate the dynamics and distribution of mitochondria in neural cells. The sequence is that of Protein ARMCX6 (ARMCX6) from Homo sapiens (Human).